The primary structure comprises 92 residues: Acylphosphatase (92 aa).

C5 and C49 are disulfide-bonded. Residues C5 to R92 form the Acylphosphatase-like domain. Catalysis depends on residues R20 and N38.

Belongs to the acylphosphatase family.

The catalysed reaction is an acyl phosphate + H2O = a carboxylate + phosphate + H(+). The polypeptide is Acylphosphatase (Escherichia coli O6:H1 (strain CFT073 / ATCC 700928 / UPEC)).